The primary structure comprises 192 residues: uncharacterized protein (192 aa).

The Nudix hydrolase domain maps to 29-160; it reads HRQAAVLIPI…PLDIYRRGDS (132 aa). A Nudix box motif is present at residues 67 to 89; that stretch reads GAVDDTDASAIAAALREAEEEVA. Residues E83 and E87 each contribute to the Mg(2+) site.

Belongs to the Nudix hydrolase family. PCD1 subfamily. Mn(2+) is required as a cofactor. Mg(2+) serves as cofactor.

Functionally, probably mediates the hydrolysis of some nucleoside diphosphate derivatives. This is an uncharacterized protein from Escherichia coli (strain K12).